The chain runs to 147 residues: UPF0306 protein YhbP (147 aa).

The protein belongs to the UPF0306 family.

In Salmonella schwarzengrund (strain CVM19633), this protein is UPF0306 protein YhbP.